The primary structure comprises 193 residues: CASP-like protein 1D1 (193 aa).

The segment at 1–24 is disordered; it reads MGYETKSTLDTERSTAPGTGTTTK. Topologically, residues 1-30 are cytoplasmic; it reads MGYETKSTLDTERSTAPGTGTTTKSCSMTQ. Residues 14 to 24 show a composition bias toward polar residues; the sequence is STAPGTGTTTK. The chain crosses the membrane as a helical span at residues 31-51; it reads VVLRFVLFAATLTSIVVMVTS. At 52-76 the chain is on the extracellular side; it reads KQTKNIFLPGTPIRIPAAEFTNSPA. Residues 77–97 traverse the membrane as a helical segment; it reads LIYFVVALSVACFYSIVSTFV. Over 98–108 the chain is Cytoplasmic; the sequence is TVSAFKKHSCS. Residues 109 to 129 traverse the membrane as a helical segment; sequence AVLLLNLAIMDAVMVGIVASA. Residues 130–162 lie on the Extracellular side of the membrane; the sequence is TGAGGGVAYLGLKGNKEVRWGKICHIYDKFCRH. The chain crosses the membrane as a helical span at residues 163-183; the sequence is VGGAIAVSLFASVVLLLLSII. The Cytoplasmic segment spans residues 184–193; that stretch reads SVLSLYKKIR.

It belongs to the Casparian strip membrane proteins (CASP) family. Homodimer and heterodimers.

Its subcellular location is the cell membrane. This chain is CASP-like protein 1D1, found in Arabidopsis thaliana (Mouse-ear cress).